We begin with the raw amino-acid sequence, 502 residues long: ATP synthase subunit alpha (502 aa).

ATP is bound at residue 169–176; sequence GDRQTGKT.

This sequence belongs to the ATPase alpha/beta chains family. F-type ATPases have 2 components, CF(1) - the catalytic core - and CF(0) - the membrane proton channel. CF(1) has five subunits: alpha(3), beta(3), gamma(1), delta(1), epsilon(1). CF(0) has three main subunits: a(1), b(2) and c(9-12). The alpha and beta chains form an alternating ring which encloses part of the gamma chain. CF(1) is attached to CF(0) by a central stalk formed by the gamma and epsilon chains, while a peripheral stalk is formed by the delta and b chains.

Its subcellular location is the cell inner membrane. The enzyme catalyses ATP + H2O + 4 H(+)(in) = ADP + phosphate + 5 H(+)(out). In terms of biological role, produces ATP from ADP in the presence of a proton gradient across the membrane. The alpha chain is a regulatory subunit. In Geobacter sp. (strain M21), this protein is ATP synthase subunit alpha.